Here is a 209-residue protein sequence, read N- to C-terminus: Protein-L-isoaspartate O-methyltransferase (209 aa).

Serine 59 is a catalytic residue.

It belongs to the methyltransferase superfamily. L-isoaspartyl/D-aspartyl protein methyltransferase family. As to quaternary structure, monomer.

It is found in the cytoplasm. The enzyme catalyses [protein]-L-isoaspartate + S-adenosyl-L-methionine = [protein]-L-isoaspartate alpha-methyl ester + S-adenosyl-L-homocysteine. Catalyzes the methyl esterification of L-isoaspartyl residues in peptides and proteins that result from spontaneous decomposition of normal L-aspartyl and L-asparaginyl residues. It plays a role in the repair and/or degradation of damaged proteins. The polypeptide is Protein-L-isoaspartate O-methyltransferase (pcm) (Helicobacter pylori (strain J99 / ATCC 700824) (Campylobacter pylori J99)).